Consider the following 41-residue polypeptide: Plantazolicin (41 aa).

The propeptide occupies 1-27 (MTKITIPTALSAKVHGEGQHLFEPMAA). N2,N2-dimethylarginine; in form plantazolicin A is present on R28. The thiazole-4-carboxylic acid (Arg-Cys) cross-link spans 28–29 (RC). 2 consecutive cross-links (5-methyloxazole-4-carboxylic acid (Cys-Thr)) follow at residues 29 to 30 (CT) and 31 to 32 (CT). Residues 30 to 31 (TC) constitute a cross-link (thiazole-4-carboxylic acid (Thr-Cys)). Positions 32–33 (TT) form a cross-link, 5-methyloxazole-4-carboxylic acid (Thr-Thr). Positions 35 to 36 (IS) form a cross-link, oxazole-4-carboxylic acid (Ile-Ser). Cross-links (oxazole-4-carboxylic acid (Ser-Ser)) lie at residues 36-37 (SS), 37-38 (SS), and 38-39 (SS). The 5-methyloxazoline-4-carboxylic acid (Ser-Thr) cross-link spans 39 to 40 (ST).

In terms of processing, maturation of thiazole and oxazole containing antibiotics involves the enzymatic condensation of a Cys, Ser or Thr with the alpha-carbonyl of the preceding amino acid to form a thioether or ether bond, then dehydration to form a double bond with the alpha-amino nitrogen. Thiazoline or oxazoline ring are dehydrogenated to form thiazole or oxazole rings.

It is found in the secreted. Its subcellular location is the cell wall. Its function is as follows. Peptide antibiotic inhibiting growth of Gram-positive bacteria. The mode of action appears to be disruption of cell walls and lysis of cells. In Bacillus pumilus (strain ATCC 7061 / DSM 27 / CCUG 26015 / JCM 2508 / NBRC 12092 / NCIMB 9369 / NCTC 10337 / NRRL NRS-272 / CCM 2144), this protein is Plantazolicin.